The primary structure comprises 820 residues: G-type lectin S-receptor-like serine/threonine-protein kinase At1g11280 (820 aa).

Positions 1-28 (MGIHLGEIGIVLFPWFLWLSLFLSCGYA) are cleaved as a signal peptide. The Bulb-type lectin domain maps to 29–148 (AITISSPLTL…VSENLLWQSF (120 aa)). The Extracellular portion of the chain corresponds to 29–434 (AITISSPLTL…SELAGSRRTK (406 aa)). N-linked (GlcNAc...) asparagine glycans are attached at residues asparagine 57, asparagine 92, asparagine 98, asparagine 241, and asparagine 272. The 37-residue stretch at 283 to 319 (PANLCDLYGACGPFGLCVTSNPTKCKCMKGFVPKYKE) folds into the EGF-like domain. 2 disulfide bridges follow: cysteine 287–cysteine 299 and cysteine 293–cysteine 307. 3 N-linked (GlcNAc...) asparagine glycosylation sites follow: asparagine 325, asparagine 341, and asparagine 384. The PAN domain maps to 338–422 (CQANLSTKTQ…VGGEFLSIRL (85 aa)). Cystine bridges form between cysteine 377–cysteine 398 and cysteine 381–cysteine 387. Residues 435–455 (IIVGSISLSIFVILAFGSYKY) form a helical membrane-spanning segment. The Cytoplasmic portion of the chain corresponds to 456–820 (WRYRAKQNVG…HVTQTEIYGR (365 aa)). Residues 505 to 792 (FNVSNKLGQG…DLPRPKQPLF (288 aa)) form the Protein kinase domain. Residues 511–519 (LGQGGFGPV) and lysine 533 contribute to the ATP site. A phosphoserine mark is found at serine 539 and serine 554. The segment at 594 to 611 (TLKLQIDWPKRFNIIQGV) is caM-binding. Aspartate 630 functions as the Proton acceptor in the catalytic mechanism. A phosphoserine mark is found at serine 634 and serine 647. Threonine 664 is subject to Phosphothreonine. A phosphoserine mark is found at serine 707, serine 708, and serine 808. Phosphothreonine is present on threonine 815.

This sequence belongs to the protein kinase superfamily. Ser/Thr protein kinase family.

It is found in the cell membrane. It carries out the reaction L-seryl-[protein] + ATP = O-phospho-L-seryl-[protein] + ADP + H(+). The enzyme catalyses L-threonyl-[protein] + ATP = O-phospho-L-threonyl-[protein] + ADP + H(+). The polypeptide is G-type lectin S-receptor-like serine/threonine-protein kinase At1g11280 (Arabidopsis thaliana (Mouse-ear cress)).